The sequence spans 174 residues: Protein GrpE (174 aa).

It belongs to the GrpE family. As to quaternary structure, homodimer.

It localises to the cytoplasm. Participates actively in the response to hyperosmotic and heat shock by preventing the aggregation of stress-denatured proteins, in association with DnaK and GrpE. It is the nucleotide exchange factor for DnaK and may function as a thermosensor. Unfolded proteins bind initially to DnaJ; upon interaction with the DnaJ-bound protein, DnaK hydrolyzes its bound ATP, resulting in the formation of a stable complex. GrpE releases ADP from DnaK; ATP binding to DnaK triggers the release of the substrate protein, thus completing the reaction cycle. Several rounds of ATP-dependent interactions between DnaJ, DnaK and GrpE are required for fully efficient folding. This is Protein GrpE from Methanothermobacter thermautotrophicus (strain ATCC 29096 / DSM 1053 / JCM 10044 / NBRC 100330 / Delta H) (Methanobacterium thermoautotrophicum).